The sequence spans 296 residues: NAD kinase (296 aa).

D72 (proton acceptor) is an active-site residue. NAD(+)-binding positions include 72 to 73, 146 to 147, R157, K174, D176, 187 to 192, and Q247; these read DG, ND, and TAYALS.

It belongs to the NAD kinase family. A divalent metal cation is required as a cofactor.

The protein localises to the cytoplasm. The enzyme catalyses NAD(+) + ATP = ADP + NADP(+) + H(+). In terms of biological role, involved in the regulation of the intracellular balance of NAD and NADP, and is a key enzyme in the biosynthesis of NADP. Catalyzes specifically the phosphorylation on 2'-hydroxyl of the adenosine moiety of NAD to yield NADP. In Pseudomonas putida (strain ATCC 700007 / DSM 6899 / JCM 31910 / BCRC 17059 / LMG 24140 / F1), this protein is NAD kinase.